The sequence spans 194 residues: Crossover junction endodeoxyribonuclease RuvC (194 aa).

Residues aspartate 8, glutamate 72, and aspartate 144 contribute to the active site. The Mg(2+) site is built by aspartate 8, glutamate 72, and aspartate 144.

Belongs to the RuvC family. In terms of assembly, homodimer which binds Holliday junction (HJ) DNA. The HJ becomes 2-fold symmetrical on binding to RuvC with unstacked arms; it has a different conformation from HJ DNA in complex with RuvA. In the full resolvosome a probable DNA-RuvA(4)-RuvB(12)-RuvC(2) complex forms which resolves the HJ. Requires Mg(2+) as cofactor.

It is found in the cytoplasm. The catalysed reaction is Endonucleolytic cleavage at a junction such as a reciprocal single-stranded crossover between two homologous DNA duplexes (Holliday junction).. In terms of biological role, the RuvA-RuvB-RuvC complex processes Holliday junction (HJ) DNA during genetic recombination and DNA repair. Endonuclease that resolves HJ intermediates. Cleaves cruciform DNA by making single-stranded nicks across the HJ at symmetrical positions within the homologous arms, yielding a 5'-phosphate and a 3'-hydroxyl group; requires a central core of homology in the junction. The consensus cleavage sequence is 5'-(A/T)TT(C/G)-3'. Cleavage occurs on the 3'-side of the TT dinucleotide at the point of strand exchange. HJ branch migration catalyzed by RuvA-RuvB allows RuvC to scan DNA until it finds its consensus sequence, where it cleaves and resolves the cruciform DNA. This is Crossover junction endodeoxyribonuclease RuvC from Psychrobacter cryohalolentis (strain ATCC BAA-1226 / DSM 17306 / VKM B-2378 / K5).